Here is a 108-residue protein sequence, read N- to C-terminus: SPbeta prophage-derived uncharacterized HTH-type transcriptional regulator YonR (108 aa).

Residues 6-60 form the HTH cro/C1-type domain; sequence LKKCRTSKGYSQQRMADFLGITRQGYGKYEIGKAEPDLKTLTKLSNILGVSTDFL. The H-T-H motif DNA-binding region spans 17–36; sequence QQRMADFLGITRQGYGKYEI.

The protein is SPbeta prophage-derived uncharacterized HTH-type transcriptional regulator YonR (yonR) of Bacillus subtilis (strain 168).